Here is a 324-residue protein sequence, read N- to C-terminus: Transcriptional regulator protein Pur-beta (324 aa).

Residues 1 to 47 (MADGDSGSERGGGGGGGGGPGGFQPAPRGGGGGGGGPGGEQETQELA) are disordered. An N-acetylalanine modification is found at A2. 2 positions are modified to phosphoserine: S6 and S8. Gly residues predominate over residues 9 to 39 (ERGGGGGGGGGPGGFQPAPRGGGGGGGGPGG). R28 is subject to Omega-N-methylarginine. The segment at 37–263 (PGGEQETQEL…GVFLRVSEVK (227 aa)) is DNA-binding. T43 bears the Phosphothreonine mark. S113 is modified (phosphoserine). R164 is subject to Omega-N-methylarginine. Residue K279 is modified to N6-acetyllysine. Residues 297–307 (RQRDKLYERRG) show a composition bias toward basic and acidic residues. The segment at 297–324 (RQRDKLYERRGGGSGGGDESEGEEVDED) is disordered. An Omega-N-methylarginine modification is found at R306. A phosphoserine mark is found at S310 and S316. The span at 314–324 (DESEGEEVDED) shows a compositional bias: acidic residues.

It belongs to the PUR DNA-binding protein family. In terms of assembly, homodimer, heterodimer with PURA and heterotrimer with PURA and YBX1/Y-box protein 1. Interacts with MYOCD and SRF.

Its subcellular location is the nucleus. In terms of biological role, transcriptional regulator which can act as an activator or a repressor. Represses the transcription of ACTA2 in fibroblasts and smooth muscle cells via its ability to interact with the purine-rich strand of a MCAT-containing element in the 5' flanking region of the gene. Represses the transcription of MYOCD, capable of repressing all isoforms of MYOCD but the magnitude of the repressive effects is most notable for the SMC-specific isoforms. Promotes hepatic glucose production by activating the transcription of ADCY6, leading to cAMP accumulation, increased PKA activity, CREB activation, and increased transcription of PCK1 and G6PC genes. Has capacity to bind repeated elements in single-stranded DNA such as the purine-rich single strand of the PUR element located upstream of the MYC gene. Participates in transcriptional and translational regulation of alpha-MHC expression in cardiac myocytes by binding to the purine-rich negative regulatory (PNR) element. Modulates constitutive liver galectin-3 gene transcription by binding to its promoter. May play a role in the dendritic transport of a subset of mRNAs. The sequence is that of Transcriptional regulator protein Pur-beta (Purb) from Mus musculus (Mouse).